A 264-amino-acid chain; its full sequence is 3-methyl-2-oxobutanoate hydroxymethyltransferase (264 aa).

Mg(2+) is bound by residues Asp-45 and Asp-84. 3-methyl-2-oxobutanoate contacts are provided by residues 45-46 (DS), Asp-84, and Lys-112. A Mg(2+)-binding site is contributed by Glu-114. The active-site Proton acceptor is the Glu-181.

Belongs to the PanB family. As to quaternary structure, homodecamer; pentamer of dimers. The cofactor is Mg(2+).

Its subcellular location is the cytoplasm. The enzyme catalyses 3-methyl-2-oxobutanoate + (6R)-5,10-methylene-5,6,7,8-tetrahydrofolate + H2O = 2-dehydropantoate + (6S)-5,6,7,8-tetrahydrofolate. The protein operates within cofactor biosynthesis; (R)-pantothenate biosynthesis; (R)-pantoate from 3-methyl-2-oxobutanoate: step 1/2. Its function is as follows. Catalyzes the reversible reaction in which hydroxymethyl group from 5,10-methylenetetrahydrofolate is transferred onto alpha-ketoisovalerate to form ketopantoate. This is 3-methyl-2-oxobutanoate hydroxymethyltransferase from Shewanella putrefaciens (strain CN-32 / ATCC BAA-453).